The primary structure comprises 505 residues: tRNA-2-methylthio-N(6)-dimethylallyladenosine synthase (505 aa).

Residues 1-39 (MGQKAKAQAPTTHPRPHTLSSQVAPALPRRPRHAAPESL) form a disordered region. In terms of domain architecture, MTTase N-terminal spans 47-162 (MKAHLITYGC…IGAALESNER (116 aa)). Residues Cys56, Cys92, Cys125, Cys194, Cys198, and Cys201 each contribute to the [4Fe-4S] cluster site. Residues 180–413 (PSGKLQAHLT…IARQKDWSAR (234 aa)) enclose the Radical SAM core domain. Positions 416–479 (AQKVGTVQQV…PHMMYGHILG (64 aa)) constitute a TRAM domain.

It belongs to the methylthiotransferase family. MiaB subfamily. Monomer. The cofactor is [4Fe-4S] cluster.

Its subcellular location is the cytoplasm. It catalyses the reaction N(6)-dimethylallyladenosine(37) in tRNA + (sulfur carrier)-SH + AH2 + 2 S-adenosyl-L-methionine = 2-methylsulfanyl-N(6)-dimethylallyladenosine(37) in tRNA + (sulfur carrier)-H + 5'-deoxyadenosine + L-methionine + A + S-adenosyl-L-homocysteine + 2 H(+). In terms of biological role, catalyzes the methylthiolation of N6-(dimethylallyl)adenosine (i(6)A), leading to the formation of 2-methylthio-N6-(dimethylallyl)adenosine (ms(2)i(6)A) at position 37 in tRNAs that read codons beginning with uridine. The chain is tRNA-2-methylthio-N(6)-dimethylallyladenosine synthase from Deinococcus radiodurans (strain ATCC 13939 / DSM 20539 / JCM 16871 / CCUG 27074 / LMG 4051 / NBRC 15346 / NCIMB 9279 / VKM B-1422 / R1).